A 60-amino-acid chain; its full sequence is Large ribosomal subunit protein uL30 (60 aa).

This sequence belongs to the universal ribosomal protein uL30 family. As to quaternary structure, part of the 50S ribosomal subunit.

This chain is Large ribosomal subunit protein uL30, found in Burkholderia mallei (strain NCTC 10247).